A 557-amino-acid chain; its full sequence is Beta-amylase 2, chloroplastic (557 aa).

A chloroplast-targeting transit peptide spans 1 to 38 (MMSLNLAHQTGAAAAVAPAAPRTAVVAAAAGTVSAPAV). Aspartate 135, histidine 175, and aspartate 183 together coordinate substrate. Glutamate 267 acts as the Proton donor in catalysis. 3 residues coordinate substrate: lysine 380, histidine 385, and threonine 427. Glutamate 465 serves as the catalytic Proton acceptor. Substrate-binding positions include 466-467 (NA) and arginine 499.

The protein belongs to the glycosyl hydrolase 14 family.

The protein resides in the plastid. Its subcellular location is the chloroplast. The enzyme catalyses Hydrolysis of (1-&gt;4)-alpha-D-glucosidic linkages in polysaccharides so as to remove successive maltose units from the non-reducing ends of the chains.. In terms of biological role, possesses beta-amylase activity in vitro. May be involved in cold resistance by mediating the accumulation of maltose upon freezing stress, thus contributing to the protection of membranes. In Oryza sativa subsp. japonica (Rice), this protein is Beta-amylase 2, chloroplastic.